The primary structure comprises 90 residues: Antitoxin epsilon (90 aa).

The protein belongs to the epsilon antitoxin family. In terms of assembly, in the presence of the zeta toxin, forms an inactive PezA(2)PezT(2) heterotetramer.

Its function is as follows. Antitoxin component of a type II toxin-antitoxin (TA) system. Neutralizes the toxic effect of cognate zeta toxin. Part of a postsegregational killing (PSK) system involved in the killing of plasmid-free cells. Continuous synthesis of the epsilon antitoxin is required to counteract the zeta toxin. In Streptococcus agalactiae, this protein is Antitoxin epsilon.